The primary structure comprises 256 residues: Peroxisomal membrane protein PMP30A (256 aa).

It belongs to the peroxin-11 family.

The protein localises to the peroxisome membrane. Its function is as follows. Involved in peroxisomal proliferation. Could participate in peroxisomal elongation or fission. May be involved in parceling of peroxisomes into regular quanta. This chain is Peroxisomal membrane protein PMP30A (PEX11A), found in Candida boidinii (Yeast).